The primary structure comprises 122 residues: U1 small nuclear ribonucleoprotein C (122 aa).

The segment at 4–36 (YFCDYCDTYLTHDSPSVRKTHCSGRKHKDNVKM) adopts a Matrin-type zinc-finger fold.

It belongs to the U1 small nuclear ribonucleoprotein C family. U1 snRNP is composed of the 7 core Sm proteins B/B', D1, D2, D3, E, F and G that assemble in a heptameric protein ring on the Sm site of the small nuclear RNA to form the core snRNP, and at least 3 U1 snRNP-specific proteins U1-70K, U1-A and U1-C. U1-C interacts with U1 snRNA and the 5' splice-site region of the pre-mRNA.

Its subcellular location is the nucleus. In terms of biological role, component of the spliceosomal U1 snRNP, which is essential for recognition of the pre-mRNA 5' splice-site and the subsequent assembly of the spliceosome. U1-C is directly involved in initial 5' splice-site recognition for both constitutive and regulated alternative splicing. The interaction with the 5' splice-site seems to precede base-pairing between the pre-mRNA and the U1 snRNA. Stimulates commitment or early (E) complex formation by stabilizing the base pairing of the 5' end of the U1 snRNA and the 5' splice-site region. The polypeptide is U1 small nuclear ribonucleoprotein C (Ciona intestinalis (Transparent sea squirt)).